Here is a 757-residue protein sequence, read N- to C-terminus: Transcription regulator rua1 (757 aa).

Disordered stretches follow at residues S122 to S169, N181 to D218, R237 to T295, S372 to L393, and M422 to A582. Positions S125–G165 are enriched in low complexity. 2 stretches are compositionally biased toward polar residues: residues N181–S190 and Q200–D218. Residues G240–K249 show a composition bias toward basic residues. Positions L253–H277 are enriched in polar residues. The segment covering P379–L393 has biased composition (pro residues). The span at P428–R437 shows a compositional bias: polar residues. Basic residues predominate over residues S439–S453. Composition is skewed to low complexity over residues R454–A465, A494–A510, and T543–A582. The segment at R661 to S692 adopts a C2H2-type 1 degenerate zinc-finger fold. The C2H2-type 2; degenerate zinc finger occupies G717–R750.

It is found in the nucleus. In terms of biological role, transcription factor; part of the gene cluster that mediates the biosynthesis of the glycolipid biosurfactant ustilagic acid (UA). UA is a secreted cellobiose glycolipid that is toxic for many microorganisms and confers biocontrol activity to U.maydis. Recognizes and binds to the specific 5'-T/G-G/T-C-G-C-A-T-A/T-C/T-C/T-G/A-3' upstream activating sequence found in all promoters of the UA biosynthesis genes. The sequence is that of Transcription regulator rua1 from Mycosarcoma maydis (Corn smut fungus).